Consider the following 326-residue polypeptide: Putative HTH-type transcriptional regulator y4qH (326 aa).

Positions 257–322 (AVQKIPALSL…VAAIKAISLG (66 aa)) constitute an HTH luxR-type domain. The segment at residues 281–300 (SWDIGVIMRISENTVNFHIK) is a DNA-binding region (H-T-H motif).

The protein belongs to the autoinducer-regulated transcriptional regulatory protein family.

The protein is Putative HTH-type transcriptional regulator y4qH of Sinorhizobium fredii (strain NBRC 101917 / NGR234).